The following is a 752-amino-acid chain: Photosystem I P700 chlorophyll a apoprotein A1 (752 aa).

8 helical membrane passes run 73–96 (IFSA…FHGA), 159–182 (LYVT…FHYH), 198–222 (LNHH…HVSL), 294–312 (IAHH…GHMY), 349–372 (WHAN…HHMY), 388–414 (LSLF…IFMI), 436–458 (ALIS…LYIH), and 533–551 (FMVH…LILL). Residues cysteine 575 and cysteine 584 each coordinate [4Fe-4S] cluster. 2 consecutive transmembrane segments (helical) span residues 591 to 612 (HVFL…HFSW) and 666 to 688 (ISAY…MFLF). Histidine 677 contacts chlorophyll a'. Chlorophyll a contacts are provided by methionine 685 and tyrosine 693. Tryptophan 694 provides a ligand contact to phylloquinone. The chain crosses the membrane as a helical span at residues 726–746 (AVGAAHYLLGGIATTWAFFLS).

This sequence belongs to the PsaA/PsaB family. The PsaA/B heterodimer binds the P700 chlorophyll special pair and subsequent electron acceptors. PSI consists of a core antenna complex that captures photons, and an electron transfer chain that converts photonic excitation into a charge separation. The eukaryotic PSI reaction center is composed of at least 11 subunits. The cofactor is P700 is a chlorophyll a/chlorophyll a' dimer, A0 is one or more chlorophyll a, A1 is one or both phylloquinones and FX is a shared 4Fe-4S iron-sulfur center..

It localises to the plastid. The protein localises to the chloroplast thylakoid membrane. The enzyme catalyses reduced [plastocyanin] + hnu + oxidized [2Fe-2S]-[ferredoxin] = oxidized [plastocyanin] + reduced [2Fe-2S]-[ferredoxin]. In terms of biological role, psaA and PsaB bind P700, the primary electron donor of photosystem I (PSI), as well as the electron acceptors A0, A1 and FX. PSI is a plastocyanin/cytochrome c6-ferredoxin oxidoreductase, converting photonic excitation into a charge separation, which transfers an electron from the donor P700 chlorophyll pair to the spectroscopically characterized acceptors A0, A1, FX, FA and FB in turn. Oxidized P700 is reduced on the lumenal side of the thylakoid membrane by plastocyanin or cytochrome c6. This Cyanidium caldarium (Red alga) protein is Photosystem I P700 chlorophyll a apoprotein A1.